Consider the following 168-residue polypeptide: Cyanate hydratase (168 aa).

Active-site residues include Arg-94, Glu-97, and Ser-120.

It belongs to the cyanase family.

The enzyme catalyses cyanate + hydrogencarbonate + 3 H(+) = NH4(+) + 2 CO2. Catalyzes the reaction of cyanate with bicarbonate to produce ammonia and carbon dioxide. The sequence is that of Cyanate hydratase from Oryza sativa subsp. indica (Rice).